A 475-amino-acid chain; its full sequence is Isocitrate dehydrogenase [NADP] (475 aa).

Thr-104 contacts NADP(+). Ser-113, Asn-115, Arg-119, Arg-129, and Arg-153 together coordinate D-threo-isocitrate. Asp-362 is a binding site for Mg(2+). NADP(+) is bound by residues 394–400 (HGTAPKH), Asn-407, Tyr-446, and Arg-450.

Belongs to the isocitrate and isopropylmalate dehydrogenases family. As to quaternary structure, homodimer. The cofactor is Mg(2+). Requires Mn(2+) as cofactor.

The protein localises to the cytoplasm. It catalyses the reaction D-threo-isocitrate + NADP(+) = 2-oxoglutarate + CO2 + NADPH. With respect to regulation, inhibited non-competitively by ADP and 2-oxoglutarate, with respect to isocitrate and in a competitive manner by NADPH. Functionally, catalyzes the oxidative decarboxylation of isocitrate to 2-oxoglutarate and carbon dioxide with the concomitant reduction of NADP(+). Is specific for NADP(+), cannot use NAD(+). The sequence is that of Isocitrate dehydrogenase [NADP] from Synechocystis sp. (strain ATCC 27184 / PCC 6803 / Kazusa).